A 791-amino-acid polypeptide reads, in one-letter code: GDH/6PGL endoplasmic bifunctional protein (791 aa).

The N-terminal stretch at 1–19 is a signal peptide; sequence MWNMLIVAMCLALLGCLQA. A Pyrrolidone carboxylic acid modification is found at Gln-20. The tract at residues 20–526 is hexose-6-phosphate dehydrogenase; that stretch reads QELQGHVSII…SGRLFFSQQQ (507 aa). NADP(+) is bound by residues 32 to 39 and Tyr-149; that span reads GATGDLAK. N-linked (GlcNAc...) asparagine glycosylation occurs at Asn-157. Lys-174 serves as a coordination point for NADP(+). Residues Lys-174, 204-208, Glu-243, and Asp-262 each bind D-glucose 6-phosphate; that span reads HYLGK. Lys-208 carries the post-translational modification N6-succinyllysine. The Proton acceptor role is filled by His-267. An N-linked (GlcNAc...) asparagine glycan is attached at Asn-282. D-glucose 6-phosphate is bound by residues Lys-360 and Arg-365. Arg-370 serves as a coordination point for NADP(+). Residues 527–540 are linker; it reads PEQLVPGPGPAPMP. Residues 541-791 form a 6-phosphogluconolactonase region; it reads SDFQVLRAKY…WYMDYDAFLG (251 aa). NADP(+) is bound at residue Trp-617. N-linked (GlcNAc...) asparagine glycosylation occurs at Asn-683.

This sequence in the N-terminal section; belongs to the glucose-6-phosphate dehydrogenase family. In the C-terminal section; belongs to the glucosamine/galactosamine-6-phosphate isomerase family. 6-phosphogluconolactonase subfamily. Homodimer. In terms of tissue distribution, present in most tissues examined, strongest in liver.

It is found in the endoplasmic reticulum lumen. The catalysed reaction is D-glucose 6-phosphate + NADP(+) = 6-phospho-D-glucono-1,5-lactone + NADPH + H(+). It catalyses the reaction D-glucose 6-phosphate + NAD(+) = 6-phospho-D-glucono-1,5-lactone + NADH + H(+). It carries out the reaction 6-phospho-D-glucono-1,5-lactone + H2O = 6-phospho-D-gluconate + H(+). The enzyme catalyses 2-deoxy-D-glucose 6-phosphate + NAD(+) = 2-deoxy-6-phospho-D-glucono-1,5-lactone + NADH + H(+). The catalysed reaction is 2-deoxy-D-glucose 6-phosphate + NADP(+) = 2-deoxy-6-phospho-D-glucono-1,5-lactone + NADPH + H(+). It catalyses the reaction D-galactose 6-phosphate + NADP(+) = 6-phospho-D-galactono-1,5-lactone + NADPH + H(+). It carries out the reaction D-galactose 6-phosphate + NAD(+) = 6-phospho-D-galactono-1,5-lactone + NADH + H(+). The enzyme catalyses D-glucosamine 6-phosphate + NADP(+) = 2-amino-2-deoxy-6-phospho-D-glucono-1,5-lactone + NADPH + 2 H(+). The catalysed reaction is D-glucose + NAD(+) = D-glucono-1,5-lactone + NADH + H(+). It catalyses the reaction D-glucose + NADP(+) = D-glucono-1,5-lactone + NADPH + H(+). It carries out the reaction D-glucose 6-sulfate + NADP(+) = 6-sulfo-D-glucono-1,5-lactone + NADPH + H(+). Its pathway is carbohydrate degradation; pentose phosphate pathway; D-ribulose 5-phosphate from D-glucose 6-phosphate (oxidative stage): step 1/3. The protein operates within carbohydrate degradation; pentose phosphate pathway; D-ribulose 5-phosphate from D-glucose 6-phosphate (oxidative stage): step 2/3. It functions in the pathway carbohydrate degradation; pentose phosphate pathway; D-ribulose 5-phosphate from D-glucose 6-phosphate (oxidative stage). Its function is as follows. Bifunctional enzyme localized in the lumen of the endoplasmic reticulum that catalyzes the first two steps of the oxidative branch of the pentose phosphate pathway/shunt, an alternative to glycolysis and a major source of reducing power and metabolic intermediates for biosynthetic processes. Has a hexose-6-phosphate dehydrogenase activity, with broad substrate specificity compared to glucose-6-phosphate 1-dehydrogenase/G6PD, and catalyzes the first step of the pentose phosphate pathway. In addition, acts as a 6-phosphogluconolactonase and catalyzes the second step of the pentose phosphate pathway. May have a dehydrogenase activity for alternative substrates including glucosamine 6-phosphate and glucose 6-sulfate. The main function of this enzyme is to provide reducing equivalents such as NADPH to maintain the adequate levels of reductive cofactors in the oxidizing environment of the endoplasmic reticulum. By producing NADPH that is needed by reductases of the lumen of the endoplasmic reticulum like corticosteroid 11-beta-dehydrogenase isozyme 1/HSD11B1, indirectly regulates their activity. The protein is GDH/6PGL endoplasmic bifunctional protein of Homo sapiens (Human).